The primary structure comprises 196 residues: Thymidine kinase (196 aa).

ATP is bound by residues 9–16 (SAMNAGKS) and 88–91 (DEAQ). The active-site Proton acceptor is the Glu89. 4 residues coordinate Zn(2+): Cys146, Cys148, Cys183, and His186.

Belongs to the thymidine kinase family. As to quaternary structure, homotetramer.

The protein localises to the cytoplasm. The catalysed reaction is thymidine + ATP = dTMP + ADP + H(+). In Coxiella burnetii (strain RSA 493 / Nine Mile phase I), this protein is Thymidine kinase.